We begin with the raw amino-acid sequence, 377 residues long: GTP 3',8-cyclase (377 aa).

The interval 1–29 (MTTRLYLSPTPPRNDREGASKSTSASIKH) is disordered. The region spanning 45-271 (RFGRIARDLR…FTLSPAKEPR (227 aa)) is the Radical SAM core domain. Arginine 54 is a binding site for GTP. 2 residues coordinate [4Fe-4S] cluster: cysteine 61 and cysteine 65. Tyrosine 67 contributes to the S-adenosyl-L-methionine binding site. Cysteine 68 provides a ligand contact to [4Fe-4S] cluster. A GTP-binding site is contributed by arginine 105. Glycine 109 contacts S-adenosyl-L-methionine. Position 140 (threonine 140) interacts with GTP. Serine 164 contacts S-adenosyl-L-methionine. A GTP-binding site is contributed by lysine 201. Methionine 235 contacts S-adenosyl-L-methionine. 2 residues coordinate [4Fe-4S] cluster: cysteine 304 and cysteine 307. Residue 309-311 (RSR) coordinates GTP. [4Fe-4S] cluster is bound at residue cysteine 321.

This sequence belongs to the radical SAM superfamily. MoaA family. As to quaternary structure, monomer and homodimer. [4Fe-4S] cluster is required as a cofactor.

The enzyme catalyses GTP + AH2 + S-adenosyl-L-methionine = (8S)-3',8-cyclo-7,8-dihydroguanosine 5'-triphosphate + 5'-deoxyadenosine + L-methionine + A + H(+). The protein operates within cofactor biosynthesis; molybdopterin biosynthesis. Functionally, catalyzes the cyclization of GTP to (8S)-3',8-cyclo-7,8-dihydroguanosine 5'-triphosphate. This Corynebacterium glutamicum (strain R) protein is GTP 3',8-cyclase.